The following is a 141-amino-acid chain: Aspartate 1-decarboxylase (141 aa).

S25 acts as the Schiff-base intermediate with substrate; via pyruvic acid in catalysis. S25 is subject to Pyruvic acid (Ser). T57 serves as a coordination point for substrate. Residue Y58 is the Proton donor of the active site. 73-75 provides a ligand contact to substrate; it reads GAA. The disordered stretch occupies residues 121-141; it reads ASAPVPGSRTERSPQAVVAGG.

The protein belongs to the PanD family. As to quaternary structure, heterooctamer of four alpha and four beta subunits. Pyruvate serves as cofactor. Is synthesized initially as an inactive proenzyme, which is activated by self-cleavage at a specific serine bond to produce a beta-subunit with a hydroxyl group at its C-terminus and an alpha-subunit with a pyruvoyl group at its N-terminus.

Its subcellular location is the cytoplasm. It carries out the reaction L-aspartate + H(+) = beta-alanine + CO2. The protein operates within cofactor biosynthesis; (R)-pantothenate biosynthesis; beta-alanine from L-aspartate: step 1/1. Catalyzes the pyruvoyl-dependent decarboxylation of aspartate to produce beta-alanine. The protein is Aspartate 1-decarboxylase of Streptomyces griseus subsp. griseus (strain JCM 4626 / CBS 651.72 / NBRC 13350 / KCC S-0626 / ISP 5235).